A 144-amino-acid polypeptide reads, in one-letter code: Large ribosomal subunit protein uL11 (144 aa).

It belongs to the universal ribosomal protein uL11 family. As to quaternary structure, part of the ribosomal stalk of the 50S ribosomal subunit. Interacts with L10 and the large rRNA to form the base of the stalk. L10 forms an elongated spine to which L12 dimers bind in a sequential fashion forming a multimeric L10(L12)X complex. One or more lysine residues are methylated.

Functionally, forms part of the ribosomal stalk which helps the ribosome interact with GTP-bound translation factors. In Gluconobacter oxydans (strain 621H) (Gluconobacter suboxydans), this protein is Large ribosomal subunit protein uL11.